A 241-amino-acid chain; its full sequence is Uridylate kinase (241 aa).

14–17 (KASG) is an ATP binding site. The involved in allosteric activation by GTP stretch occupies residues 22–27 (GDQGFG). Gly-56 is a binding site for UMP. Gly-57 and Arg-61 together coordinate ATP. UMP-binding positions include Asp-76 and 137–144 (TGNPFFTT). Residues Thr-164, Gln-165, Tyr-170, and Asp-173 each coordinate ATP.

This sequence belongs to the UMP kinase family. In terms of assembly, homohexamer.

The protein resides in the cytoplasm. The enzyme catalyses UMP + ATP = UDP + ADP. It participates in pyrimidine metabolism; CTP biosynthesis via de novo pathway; UDP from UMP (UMPK route): step 1/1. Allosterically activated by GTP. Inhibited by UTP. Functionally, catalyzes the reversible phosphorylation of UMP to UDP. This is Uridylate kinase from Agrobacterium fabrum (strain C58 / ATCC 33970) (Agrobacterium tumefaciens (strain C58)).